We begin with the raw amino-acid sequence, 369 residues long: Cell division protein FtsZ (369 aa).

GTP-binding positions include 27 to 31 (GAGNN), 119 to 121 (GTG), Glu-150, and Asn-189.

This sequence belongs to the FtsZ family. As to quaternary structure, homodimer. Polymerizes to form a dynamic ring structure in a strictly GTP-dependent manner. Interacts directly with several other division proteins.

The protein localises to the cytoplasm. In terms of biological role, essential cell division protein that forms a contractile ring structure (Z ring) at the future cell division site. The regulation of the ring assembly controls the timing and the location of cell division. One of the functions of the FtsZ ring is to recruit other cell division proteins to the septum to produce a new cell wall between the dividing cells. Binds GTP and shows GTPase activity. The polypeptide is Cell division protein FtsZ (Mycoplasma genitalium (strain ATCC 33530 / DSM 19775 / NCTC 10195 / G37) (Mycoplasmoides genitalium)).